Reading from the N-terminus, the 849-residue chain is Disks large homolog 3 (849 aa).

The tract at residues 32–101 (DWQVPDPYGP…GKNTPKLNGS (70 aa)) is disordered. A compositionally biased stretch (gly residues) spans 41–53 (PSGGNGASSGYGG). The segment covering 57-69 (QTLPSQAGATPTP) has biased composition (polar residues). PDZ domains follow at residues 149–235 (EIVL…VRRR), 244–330 (EVNL…VAKP), and 404–484 (KIIL…AQYR). S157 is subject to Phosphoserine. Positions 519–589 (KRSLYVRALF…PSKKRVEKKE (71 aa)) constitute an SH3 domain. Positions 659–834 (ARPVIILGPM…IYNKIKQIIE (176 aa)) constitute a Guanylate kinase-like domain. Phosphotyrosine is present on Y705.

Belongs to the MAGUK family. In terms of assembly, interacts through its PDZ domains with NETO1 and APC. Interacts through its first two PDZ domains with ERBB4. Interacts through its third PDZ domain with NLGN1, and probably with NLGN2 and NLGN3. Interacts through its PDZ domains with GRIN2B and SYNGAP1. Interacts through its guanylate kinase-like domain with DLGAP1, DLGAP2, DLGAP3 and DLGAP4. Interacts with FRMPD4 (via C-terminus). Interacts with LRFN2. Interacts with LRFN1 and LRFN4. Interacts with FLTP. Interacts with DGKI (via PDZ-binding motif).

Functionally, required for learning most likely through its role in synaptic plasticity following NMDA receptor signaling. This chain is Disks large homolog 3 (Dlg3), found in Rattus norvegicus (Rat).